The chain runs to 252 residues: Probable endonuclease 4 (252 aa).

9 residues coordinate Zn(2+): His-56, His-96, Glu-129, Asp-162, His-165, His-191, Asp-204, His-206, and Glu-233.

Belongs to the AP endonuclease 2 family. Requires Zn(2+) as cofactor.

It carries out the reaction Endonucleolytic cleavage to 5'-phosphooligonucleotide end-products.. In terms of biological role, endonuclease IV plays a role in DNA repair. It cleaves phosphodiester bonds at apurinic or apyrimidinic (AP) sites, generating a 3'-hydroxyl group and a 5'-terminal sugar phosphate. The protein is Probable endonuclease 4 of Mycobacterium leprae (strain Br4923).